Reading from the N-terminus, the 106-residue chain is uncharacterized protein (106 aa).

2 helical membrane passes run 46–68 and 73–92; these read LLQEIILFVFCALMVVSAAILAF and AVFIVLQVCVLAVLPILIAA.

It localises to the cell membrane. This is an uncharacterized protein from Bacillus subtilis (strain 168).